The sequence spans 76 residues: Large ribosomal subunit protein uL30 (76 aa).

The protein belongs to the universal ribosomal protein uL30 family. As to quaternary structure, part of the 50S ribosomal subunit.

This is Large ribosomal subunit protein uL30 from Anaeromyxobacter dehalogenans (strain 2CP-1 / ATCC BAA-258).